Consider the following 549-residue polypeptide: Glucose-6-phosphate isomerase (549 aa).

Residue Glu-355 is the Proton donor of the active site. Active-site residues include His-386 and Lys-514.

This sequence belongs to the GPI family.

Its subcellular location is the cytoplasm. The catalysed reaction is alpha-D-glucose 6-phosphate = beta-D-fructose 6-phosphate. Its pathway is carbohydrate biosynthesis; gluconeogenesis. It functions in the pathway carbohydrate degradation; glycolysis; D-glyceraldehyde 3-phosphate and glycerone phosphate from D-glucose: step 2/4. Its function is as follows. Catalyzes the reversible isomerization of glucose-6-phosphate to fructose-6-phosphate. In Salmonella agona (strain SL483), this protein is Glucose-6-phosphate isomerase.